Reading from the N-terminus, the 565-residue chain is DNA repair protein RAD7 (565 aa).

Disordered regions lie at residues 1-22 (MYRSRNRPKRGGENEVKGPNSA) and 41-68 (WYQRQSKKQEDATDEKKGKAEDDSFTAE). The segment at 1–200 (MYRSRNRPKR…SKLVFNKLRD (200 aa)) is hydrophilic. The segment covering 47 to 62 (KKQEDATDEKKGKAED) has biased composition (basic and acidic residues). 2 positions are modified to phosphoserine: Ser64 and Ser85. Positions 105–137 (ADSDEEEYETSHISDTPVSLSSANDRESLTKKR) are disordered. Polar residues predominate over residues 115 to 127 (SHISDTPVSLSSA).

The protein to S.pombe SpCC613.14. As to quaternary structure, component of the global genome repair (GGR) complex composed of at least ABF1, RAD7 and RAD16. Interacts with ELC1.

Functionally, component of the global genome repair (GGR) complex which promotes global genome nucleotide excision repair (GG-NER) which removes DNA damage from nontranscribing DNA. This protein is one of 10 proteins (RAD1, 2,3,4,7,10,14, 16,23 and MMS19) involved in excision repair of DNA damaged with UV light, bulky adducts, or cross-linking agents. This chain is DNA repair protein RAD7 (RAD7), found in Saccharomyces cerevisiae (strain ATCC 204508 / S288c) (Baker's yeast).